The primary structure comprises 83 residues: Exodeoxyribonuclease 7 small subunit (83 aa).

It belongs to the XseB family. Heterooligomer composed of large and small subunits.

The protein localises to the cytoplasm. It carries out the reaction Exonucleolytic cleavage in either 5'- to 3'- or 3'- to 5'-direction to yield nucleoside 5'-phosphates.. In terms of biological role, bidirectionally degrades single-stranded DNA into large acid-insoluble oligonucleotides, which are then degraded further into small acid-soluble oligonucleotides. This is Exodeoxyribonuclease 7 small subunit from Bradyrhizobium sp. (strain ORS 278).